Reading from the N-terminus, the 125-residue chain is Ribosome-binding factor A (125 aa).

Belongs to the RbfA family. Monomer. Binds 30S ribosomal subunits, but not 50S ribosomal subunits or 70S ribosomes.

It is found in the cytoplasm. Functionally, one of several proteins that assist in the late maturation steps of the functional core of the 30S ribosomal subunit. Associates with free 30S ribosomal subunits (but not with 30S subunits that are part of 70S ribosomes or polysomes). Required for efficient processing of 16S rRNA. May interact with the 5'-terminal helix region of 16S rRNA. The chain is Ribosome-binding factor A from Xylella fastidiosa (strain 9a5c).